The chain runs to 75 residues: MSCNCGSGCSCGSDCKCGKMYPDLTEQGSAAAQVAAVVVLGVAPENKAGQFEVAAGQSGEGCSCGDNCKCNPCNC.

It belongs to the metallothionein superfamily. Type 15 family.

In terms of biological role, metallothioneins have a high content of cysteine residues that bind various heavy metals. This chain is Metallothionein-like protein 1 (ALI1), found in Triticum aestivum (Wheat).